Consider the following 151-residue polypeptide: MKVIETKYNGKLEVAEDRLIAFDQGIPAFEDEKEFVLLPFEEGTPYYTLQSTKTVDLAFIIVNPFSFFPEYRVKLPEATIVQLNITNENDVAIFSLLTVKEPFSETTVNLQAPIVINANKQMGKQLVLGDTAYDRKQPLFQKELVLAKEAK.

Belongs to the FliW family. As to quaternary structure, interacts with translational regulator CsrA and flagellin(s).

The protein resides in the cytoplasm. Acts as an anti-CsrA protein, binds CsrA and prevents it from repressing translation of its target genes, one of which is flagellin. Binds to flagellin and participates in the assembly of the flagellum. The sequence is that of Flagellar assembly factor FliW from Halalkalibacterium halodurans (strain ATCC BAA-125 / DSM 18197 / FERM 7344 / JCM 9153 / C-125) (Bacillus halodurans).